The chain runs to 294 residues: Urease accessory protein UreD (294 aa).

Residues 1–22 are disordered; it reads MSVEKPVAAGRQNSKATGRHKG.

This sequence belongs to the UreD family. In terms of assembly, ureD, UreF and UreG form a complex that acts as a GTP-hydrolysis-dependent molecular chaperone, activating the urease apoprotein by helping to assemble the nickel containing metallocenter of UreC. The UreE protein probably delivers the nickel.

It is found in the cytoplasm. In terms of biological role, required for maturation of urease via the functional incorporation of the urease nickel metallocenter. The protein is Urease accessory protein UreD of Alcanivorax borkumensis (strain ATCC 700651 / DSM 11573 / NCIMB 13689 / SK2).